A 288-amino-acid chain; its full sequence is Stomatin (288 aa).

A disordered region spans residues 1–22; sequence MAEKRHTRDSEAQRLPDSFKDS. Residues 1-25 are Cytoplasmic-facing; the sequence is MAEKRHTRDSEAQRLPDSFKDSPSK. The residue at position 10 (serine 10) is a Phosphoserine; by PKA. Serine 18 bears the Phosphoserine mark. The stretch at 26-54 is an intramembrane region; sequence GLGPCGWILVAFSFLFTVITFPISIWMCI. A lipid anchor (S-palmitoyl cysteine) is attached at cysteine 30. The Cytoplasmic segment spans residues 55 to 288; it reads KIIKEYERAI…IIGAKHSHLG (234 aa). A lipid anchor (S-palmitoyl cysteine; partial) is attached at cysteine 87. Phosphoserine occurs at positions 161 and 244. Residues 265–273 form a required for homooligomerization region; the sequence is STIVFPLPI. The interval 267-269 is required for lipid raft association; the sequence is IVF. The segment at 273 to 287 is interaction with LANCL1; sequence IDMLQGIIGAKHSHL.

The protein belongs to the band 7/mec-2 family. In terms of assembly, homodimer and higher order homooligomer. The homodimer is banana-shaped. Interacts with ASIC1, ASIC2 and ASIC3. Interacts with LANCL1. Interacts with SLC2A1. Interacts with SLC4A1; this interaction positively regulates SLC4A1 activity. Identified in large complexes with SLC40A1, SLC14A1, SLC29A1 and AQP1. Interacts with STOML1; may redistribute STOM from the plasma membrane to late endosomes. Detected in erythrocytes (at protein level). Widely expressed.

Its subcellular location is the cell membrane. The protein resides in the cytoplasm. The protein localises to the cytoskeleton. It is found in the membrane raft. It localises to the melanosome. Its subcellular location is the cytoplasmic vesicle. Functionally, regulates ion channel activity and transmembrane ion transport. Regulates ASIC2 and ASIC3 channel activity. The sequence is that of Stomatin from Homo sapiens (Human).